The chain runs to 217 residues: Eukaryotic translation initiation factor 4E (217 aa).

The disordered stretch occupies residues 1 to 30 (MATVEPETTPTPNPPTTEEEKTESNQEVAN). An N-acetylalanine modification is found at Ala2. Thr22 carries the post-translational modification Phosphothreonine. The EIF4EBP1/2/3 binding stretch occupies residues 37–40 (HPLQ). Residue 56 to 57 (WQ) coordinates mRNA. The tract at residues 73–77 (WALYN) is EIF4EBP1/2/3 binding. 102–103 (WE) lines the mRNA pocket. The segment at 132 to 139 (ETLLCLIG) is EIF4EBP1/2/3 binding. Residues 157 to 162 (RAKGDK) and 205 to 207 (TKS) each bind mRNA. Ser209 is modified (phosphoserine; by PKC and MKNK2).

The protein belongs to the eukaryotic initiation factor 4E family. As to quaternary structure, eIF4F is a multi-subunit complex, the composition of which varies with external and internal environmental conditions. It is composed of at least EIF4A, EIF4E and EIF4G1/EIF4G3. EIF4E is also known to interact with other partners. Interacts with EIF4ENIF1/4E-T; promotes recruitment to P-bodies and import into the nucleus. Hypophosphorylated EIF4EBP1, EIF4EBP2 and EIF4EBP3 compete with EIF4G1/EIF4G3 to interact with EIF4E; insulin stimulated MAP-kinase (MAPK1 and MAPK3) phosphorylation of EIF4EBP1 causes dissociation of the complex allowing EIF4G1/EIF4G3 to bind and consequent initiation of translation. Interacts mutually exclusive with EIF4A1 or EIF4A2. Interacts with NGDN and PIWIL2. Component of the CYFIP1-EIF4E-FMR1 complex composed of CYFIP, EIF4E and FMR1. Interacts directly with CYFIP1. Interacts with CLOCK. Binds to MKNK2 in nucleus. Interacts with LIMD1, WTIP and AJUBA. Interacts with APOBEC3G in an RNA-dependent manner. Interacts with LARP1. Interacts with METTL3. Interacts with RBM24; this interaction prevents EIF4E from binding to p53/TP53 mRNA and inhibits the assembly of translation initiation complex. Interacts with DDX3X; interaction is direct and in an RNA-independent manner; this interaction enhances EIF4E cap-binding ability and is required for the repression of cap-dependent translation and the increase of IRES-mediated translation. DDX3X competes with EIF4G1 for interaction with EIF4E. Interacts with EIF4G1; which in a mutual exclusive interaction associates either with EIF1 or with EIF4E on a common binding site. Interacts with BTG4 and CNOT7. Interacts with LRPPRC (via N-terminus); the interaction promotes association of EIF4E with 4ESE-containing mRNAs. Interacts with mRNA cleavage enzyme CPSF3 and its cofactor CPSF1. Interacts (via RING-type zinc finger) with PML; the interaction results in conformational changes of both interacting proteins and reduces EIF4E affinity for the 5' m7G cap of mRNA, thus reducing EIF4E-mediated mRNA nuclear export. Interacts with homeobox protein HHEX/PRH; the interaction inhibits EIF4E-mediated mRNA nuclear export. Interacts with homeobox protein HOXA9; the interaction positively regulates EIF4E-mediated mRNA nuclear export. Interacts with homeobox protein EMX2. In terms of assembly, (Microbial infection) Interacts with Lassa virus Z protein. (Microbial infection) Interacts with Lymphocytic choriomeningitis virus (LCMV) Z protein (via RING-type zinc finger); the interaction results in conformational changes of both interacting proteins and reduces EIF4E affinity for the m7G mRNA cap structure. As to quaternary structure, (Microbial infection) Interacts (via cap-binding region) with potato virus Y VPg; this interaction mediates the translation of the VPg-viral RNA conjugates and interferes with the cellular EIF4E-dependent mRNA export and translation. In terms of processing, phosphorylation increases the ability of the protein to bind to mRNA caps and to form the eIF4F complex. Phosphorylation also enhances its mRNA transport function. Phosphorylation at Ser-209 is not essential for protein synthesis.

Its subcellular location is the cytoplasm. The protein resides in the P-body. It localises to the stress granule. It is found in the nucleus. The protein localises to the nucleus speckle. Its subcellular location is the nuclear body. Acts in the cytoplasm to initiate and regulate protein synthesis and is required in the nucleus for export of a subset of mRNAs from the nucleus to the cytoplasm which promotes processes such as RNA capping, processing and splicing. Component of the protein complex eIF4F, which is involved in the recognition of the mRNA cap, ATP-dependent unwinding of 5'-terminal secondary structure and recruitment of mRNA to the ribosome. This protein recognizes and binds the 7-methylguanosine (m7G)-containing mRNA cap during an early step in the initiation of protein synthesis and facilitates ribosome binding by inducing the unwinding of the mRNAs secondary structures. Together with EIF4G1, antagonizes the scanning promoted by EIF1-EIF4G1 and is required for TISU translation, a process where the TISU element recognition makes scanning unnecessary. In addition to its role in translation initiation, also acts as a regulator of translation and stability in the cytoplasm. Component of the CYFIP1-EIF4E-FMR1 complex which binds to the mRNA cap and mediates translational repression: in the complex, EIF4E mediates the binding to the mRNA cap. Component of a multiprotein complex that sequesters and represses translation of proneurogenic factors during neurogenesis. In P-bodies, component of a complex that mediates the storage of translationally inactive mRNAs in the cytoplasm and prevents their degradation. May play an important role in spermatogenesis through translational regulation of stage-specific mRNAs during germ cell development. As well as its roles in translation, also involved in mRNA nucleocytoplasmic transport. Its role in mRNA export from the nucleus to the cytoplasm relies on its ability to bind the m7G cap of RNAs and on the presence of the 50-nucleotide EIF4E sensitivity element (4ESE) in the 3'UTR of sensitive transcripts. Interaction with the 4ESE is mediated by LRPPRC which binds simultaneously to both EIF4E and the 4ESE, thereby acting as a platform for assembly for the RNA export complex. EIF4E-dependent mRNA export is independent of ongoing protein or RNA synthesis and is also NFX1-independent but is XPO1-dependent with LRPPRC interacting with XPO1 to form an EIF4E-dependent mRNA export complex. Alters the composition of the cytoplasmic face of the nuclear pore to promote RNA export by reducing RANBP2 expression, relocalizing nucleoporin NUP214 and increasing expression of RANBP1 and RNA export factors DDX19 and GLE1. Promotes the nuclear export of cyclin CCND1 mRNA. Promotes the nuclear export of NOS2/iNOS mRNA. Promotes the nuclear export of MDM2 mRNA. Promotes the export of additional mRNAs, including others involved in the cell cycle. In the nucleus, binds to capped splice factor-encoding mRNAs and stimulates their nuclear export to enhance splice factor production by increasing their cytoplasmic availability to the translation machinery. May also regulate splicing through interaction with the spliceosome in an RNA and m7G cap-dependent manner. Also binds to some pre-mRNAs and may play a role in their recruitment to the spliceosome. Promotes steady-state capping of a subset of coding and non-coding RNAs by mediating nuclear export of capping machinery mRNAs including RNMT, RNGTT and RAMAC to enhance their translation. Stimulates mRNA 3'-end processing by promoting the expression of several core cleavage complex factors required for mRNA cleavage and polyadenylation, and may also have a direct effect through its interaction with the CPSF3 cleavage enzyme. Rescues cells from apoptosis by promoting activation of serine/threonine-protein kinase AKT1 through mRNA export of NBS1 which potentiates AKT1 phosphorylation and also through mRNA export of AKT1 effectors, allowing for increased production of these proteins. This chain is Eukaryotic translation initiation factor 4E, found in Homo sapiens (Human).